The sequence spans 283 residues: tRNA-cytidine(32) 2-sulfurtransferase (283 aa).

The PP-loop motif motif lies at 37-42; it reads SGGKDS. The [4Fe-4S] cluster site is built by Cys-112, Cys-115, and Cys-203.

This sequence belongs to the TtcA family. Homodimer. It depends on Mg(2+) as a cofactor. Requires [4Fe-4S] cluster as cofactor.

Its subcellular location is the cytoplasm. The enzyme catalyses cytidine(32) in tRNA + S-sulfanyl-L-cysteinyl-[cysteine desulfurase] + AH2 + ATP = 2-thiocytidine(32) in tRNA + L-cysteinyl-[cysteine desulfurase] + A + AMP + diphosphate + H(+). It functions in the pathway tRNA modification. Catalyzes the ATP-dependent 2-thiolation of cytidine in position 32 of tRNA, to form 2-thiocytidine (s(2)C32). The sulfur atoms are provided by the cysteine/cysteine desulfurase (IscS) system. This Legionella pneumophila subsp. pneumophila (strain Philadelphia 1 / ATCC 33152 / DSM 7513) protein is tRNA-cytidine(32) 2-sulfurtransferase.